A 518-amino-acid polypeptide reads, in one-letter code: Golgi-associated olfactory signaling regulator (518 aa).

The signal sequence occupies residues 1–19 (MKSFSRILFLVFLLAGLRS). Topologically, residues 20 to 409 (KAAPSAPLPL…GRPRGAAGGA (390 aa)) are extracellular. The disordered stretch occupies residues 38-377 (HPSETSPLKG…ATLRAPQRHS (340 aa)). Positions 92 to 106 (DLRETPHPESPETPK) are enriched in basic and acidic residues. The N-linked (GlcNAc...) asparagine glycan is linked to Asn124. The span at 138 to 153 (TPGPTEMPHPGSPETP) shows a compositional bias: pro residues. Asn156 is a glycosylation site (N-linked (GlcNAc...) asparagine). Composition is skewed to polar residues over residues 168-180 (TPNT…TPQE) and 187-207 (LNAT…NPTK). N-linked (GlcNAc...) asparagine glycosylation is found at Asn188 and Asn220. Basic and acidic residues-rich tracts occupy residues 209 to 220 (PDPKSPEKHDLN) and 236 to 247 (DPSKTPHPESHV). Composition is skewed to polar residues over residues 248-270 (THNP…QNAT) and 276-285 (SDPQISTSLY). N-linked (GlcNAc...) asparagine glycosylation occurs at Asn268. A helical transmembrane segment spans residues 410-430 (LCLFFAGTALLIGIFVLLWCL). Over 431–518 (YRRAARQRPF…SPATLPNNFV (88 aa)) the chain is Cytoplasmic. The disordered stretch occupies residues 477 to 518 (HIATKQPPPTPPLPPKLPPPPRGGRPQRLEALSPATLPNNFV). The segment covering 482 to 499 (QPPPTPPLPPKLPPPPRG) has biased composition (pro residues).

Its subcellular location is the golgi apparatus membrane. Required for proper function of the olfactory system. May be involved in establishing the acuity of olfactory sensory signaling. The sequence is that of Golgi-associated olfactory signaling regulator (GFY) from Homo sapiens (Human).